A 641-amino-acid polypeptide reads, in one-letter code: MAQGSRAPSGPPLPVLPVDDWLNFRVDLFGDEHRRLLLEMLTQGCSNFVGLLNFGVPSPVYALEALVDFQVRNAFMKVKPVAQEIIRICILANHYRNSRDVLRDLRTQLDVLYSEPLKTRLLRGLIRLCRAAQTGVKPEDISVHLGADDVTFGVLKRALVRLHRVRDALGLRASPEAEARYPRLTTYNLLFHPPPFTTVEAVDLCAENLSDVTQRRNRPLRCLTSIKRPGSRTLEDALNDMYLLLTLRHLQLRHALELQMMQDWVVERCNRLCDALYFCYTQAPETRQTFVTLVRGLELARQHSSPAFQPMLYNLLQLLTQLHEANVYLCPGYLHFSAYKLLKKIQSVSDARERGEFGDEDEEQENDGEPREAQLDLEADPTAREGELFFFSKNLYGNGEVFRVPEQPSRYLRRRMFVERPETLQIFYNFHEGKITTETYHLQRIYSMMIEGASRQTGLTPKRFMELLDRAPLGQESEPEITEHRDLFADVFRRPVTDAASSSSASSSSSSASPNSVSLPSARSSSTRTTTPASTYTSAGTSSTTGLLLSSSSLSGSHGISSADLEQPPRQRRRMVSVTLFSPYSVAYSHHRRHRRRRSPPPAPRGPAHTRFQGPDSMPSTSYGSDVEDPRDDLAENLRHL.

Disordered stretches follow at residues 353 to 373, 500 to 572, and 587 to 641; these read ERGEFGDEDEEQENDGEPREA, ASSS…PRQR, and AYSH…LRHL. Residues 358–367 show a composition bias toward acidic residues; sequence GDEDEEQEND. Low complexity predominate over residues 500 to 563; that stretch reads ASSSSASSSS…LSGSHGISSA (64 aa). Over residues 589 to 599 the composition is skewed to basic residues; sequence SHHRRHRRRRS. Over residues 632-641 the composition is skewed to basic and acidic residues; the sequence is DDLAENLRHL.

The protein belongs to the herpesviridae pp85 family. In terms of assembly, interacts with UL82. Interacts with isoform UL35A. Interacts with host UBP7; this interaction significantly inhibits the ability of USP7 to form nuclear bodies. Interacts with host DCAF1 (via C-terminus). Interacts with host SNX5; this interaction allows proper gB localization during viral assembly. Interacts with host TBK1; this interaction prevents type I interferon production. As to quaternary structure, interacts with UL82. Interacts with isoform UL35. Interacts with host UBP7; this interaction significantly inhibits the ability of USP7 to form nuclear bodies. Interacts with host SNX5; this interaction allows proper gB localization during viral assembly.

Its subcellular location is the virion tegument. It localises to the host nucleus. It is found in the host cytoplasm. Its function is as follows. Plays important role in immediate-early gene expression through interaction with UL82. Forms nuclear bodies in host nucleus, independently of PML. In turn, UL35 nuclear bodies associate with and remodel PML bodies. Through interaction with host DCAF1, causes cells to accumulate in the G2 phase of the cell cycle by inducing a DNA damage response. Regulates viral assembly by controlling the localization of the essential gB through regulation of a retrograde transport pathway. This modulation occurs via binding and inhibition of host sorting nexin 5/SNX5. Also plays a role in the inhibition of pattern recognition receptor-mediated type I interferon signaling at the level of TBK1. Promotes cytoplasmic UL82 accumulation and inhibits UL35-containing nuclear bodies formation. Regulates viral assembly by controlling the localization of the essential gB through regulation of a retrograde transport pathway. This modulation occurs via binding and inhibition of host sorting nexin 5/SNX5. The chain is Tegument protein UL35 (UL35) from Homo sapiens (Human).